The primary structure comprises 92 residues: UPF0250 protein COSY_0496 (92 aa).

This sequence belongs to the UPF0250 family.

This chain is UPF0250 protein COSY_0496, found in Vesicomyosocius okutanii subsp. Calyptogena okutanii (strain HA).